The chain runs to 345 residues: Microtubule-associated protein Jupiter (345 aa).

The span at 1-14 (MISNFDCTDNQASS) shows a compositional bias: polar residues. Residues 1–34 (MISNFDCTDNQASSKVLRPPGGGSSDIFGSEMPQ) are disordered. Ser-24 is subject to Phosphoserine. Thr-35 carries the post-translational modification Phosphothreonine. Basic and acidic residues predominate over residues 78–87 (QKTVDSHNRL). Positions 78–100 (QKTVDSHNRLFGEPTRPITPGKN) are disordered. Phosphothreonine occurs at positions 92 and 96. Phosphoserine is present on residues Ser-105, Ser-134, and Ser-145. Disordered stretches follow at residues 127–241 (HYNG…QPHS) and 300–345 (EGNP…SGLW). Positions 132–145 (SGSVSSASSSVSSS) are enriched in low complexity. A compositionally biased stretch (polar residues) spans 146-164 (TENLKMNSGSRSVFRNMST). The segment covering 177–191 (LCPPSPVRIEPPTPP) has biased composition (pro residues). Polar residues-rich tracts occupy residues 212–226 (DNSTYTKSDQVNEAC) and 315–326 (DYNQRQESSNAG).

The protein belongs to the MAP Jupiter family.

The protein localises to the nucleus. Its subcellular location is the cytoplasm. The protein resides in the cytoskeleton. It is found in the spindle. Binds to all microtubule populations. The chain is Microtubule-associated protein Jupiter from Drosophila erecta (Fruit fly).